The sequence spans 226 residues: Triosephosphate isomerase (226 aa).

His91 functions as the Electrophile in the catalytic mechanism. Glu163 functions as the Proton acceptor in the catalytic mechanism. Substrate-binding residues include Gly169 and Ser207.

This sequence belongs to the triosephosphate isomerase family. Homodimer.

Its subcellular location is the cytoplasm. The enzyme catalyses D-glyceraldehyde 3-phosphate = dihydroxyacetone phosphate. It functions in the pathway carbohydrate biosynthesis; gluconeogenesis. Its pathway is carbohydrate degradation; glycolysis; D-glyceraldehyde 3-phosphate from glycerone phosphate: step 1/1. Its function is as follows. Involved in the gluconeogenesis. Catalyzes stereospecifically the conversion of dihydroxyacetone phosphate (DHAP) to D-glyceraldehyde-3-phosphate (G3P). The protein is Triosephosphate isomerase of Rhizobium etli (strain ATCC 51251 / DSM 11541 / JCM 21823 / NBRC 15573 / CFN 42).